The following is a 1363-amino-acid chain: DNA-directed RNA polymerase subunit beta' (1363 aa).

The segment at 1–39 (MTSTPSKSRKSSKGSKAAKAAASAPETRPLAKTPPPFRN) is disordered. A compositionally biased stretch (low complexity) spans 14 to 24 (GSKAAKAAASA). 4 residues coordinate Zn(2+): Cys248, Cys315, Cys322, and Cys325.

It belongs to the RNA polymerase beta' chain family. RpoC2 subfamily. In terms of assembly, in cyanobacteria the RNAP catalytic core is composed of 2 alpha, 1 beta, 1 beta', 1 gamma and 1 omega subunit. When a sigma factor is associated with the core the holoenzyme is formed, which can initiate transcription. Zn(2+) is required as a cofactor.

It catalyses the reaction RNA(n) + a ribonucleoside 5'-triphosphate = RNA(n+1) + diphosphate. In terms of biological role, DNA-dependent RNA polymerase catalyzes the transcription of DNA into RNA using the four ribonucleoside triphosphates as substrates. The chain is DNA-directed RNA polymerase subunit beta' from Synechococcus sp. (strain WH7803).